The following is a 122-amino-acid chain: Large ribosomal subunit protein bL12 (122 aa).

This sequence belongs to the bacterial ribosomal protein bL12 family. As to quaternary structure, homodimer. Part of the ribosomal stalk of the 50S ribosomal subunit. Forms a multimeric L10(L12)X complex, where L10 forms an elongated spine to which 2 to 4 L12 dimers bind in a sequential fashion. Binds GTP-bound translation factors.

Functionally, forms part of the ribosomal stalk which helps the ribosome interact with GTP-bound translation factors. Is thus essential for accurate translation. This chain is Large ribosomal subunit protein bL12, found in Pseudomonas entomophila (strain L48).